A 328-amino-acid polypeptide reads, in one-letter code: Transcriptional regulator protein Pur-beta-B (328 aa).

Disordered stretches follow at residues 1–35 (MADGDSGSERGGSSGGPSGFSQHMSREQETQELAS), 100–124 (SPEQIAQASGEDGAGGPGGPRRALK), and 289–328 (QERQRDKMYDRRGPGERGGSLGPGAGGGGDDSETEDVDDD). Residue Ala2 is modified to N-acetylalanine. Gly residues predominate over residues 9 to 18 (ERGGSSGGPS). The span at 24–35 (MSREQETQELAS) shows a compositional bias: basic and acidic residues. The tract at residues 27–260 (EQETQELASK…LRVSEVKPSY (234 aa)) is DNA-binding. Basic and acidic residues predominate over residues 289–303 (QERQRDKMYDRRGPG). A compositionally biased stretch (gly residues) spans 304 to 317 (ERGGSLGPGAGGGG). Residues 318 to 328 (DDSETEDVDDD) are compositionally biased toward acidic residues.

This sequence belongs to the PUR DNA-binding protein family.

Its subcellular location is the nucleus. Functionally, transcriptional regulator which can act as an activator or a repressor. The chain is Transcriptional regulator protein Pur-beta-B (purb-b) from Xenopus laevis (African clawed frog).